Consider the following 88-residue polypeptide: Phosphocarrier protein HPr (88 aa).

The 88-residue stretch at methionine 1–glutamate 88 folds into the HPr domain. The residue at position 12 (serine 12) is a Phosphoserine. Histidine 15 functions as the Pros-phosphohistidine intermediate in the catalytic mechanism. Position 46 is a phosphoserine; by HPrK/P (serine 46).

Belongs to the HPr family.

The protein resides in the cytoplasm. Phosphorylation on Ser-46 inhibits the phosphoryl transfer from enzyme I to HPr. Its function is as follows. General (non sugar-specific) component of the phosphoenolpyruvate-dependent sugar phosphotransferase system (sugar PTS). This major carbohydrate active-transport system catalyzes the phosphorylation of incoming sugar substrates concomitantly with their translocation across the cell membrane. The phosphoryl group from phosphoenolpyruvate (PEP) is transferred to the phosphoryl carrier protein HPr by enzyme I. Phospho-HPr then transfers it to the PTS EIIA domain. P-Ser-HPr interacts with the catabolite control protein A (CcpA), forming a complex that binds to DNA at the catabolite response elements cre, operator sites preceding a large number of catabolite-regulated genes. Thus, P-Ser-HPr is a corepressor in carbon catabolite repression (CCR), a mechanism that allows bacteria to coordinate and optimize the utilization of available carbon sources. P-Ser-HPr also plays a role in inducer exclusion, in which it probably interacts with several non-PTS permeases and inhibits their transport activity. The chain is Phosphocarrier protein HPr (ptsH) from Geobacillus stearothermophilus (Bacillus stearothermophilus).